The chain runs to 134 residues: Loki profilin-2 (134 aa).

The tract at residues 55 to 62 (LALGEKGI) is loki loop.

The protein belongs to the Asgard profilin family.

It localises to the cytoplasm. The protein localises to the cytoskeleton. Inhibition of rabbit actin polymerization is reduced by phosphatidylinositol-(4,5)-P2(1,2-dipalmitoyl), a soluble form of the phospholipid phosphatidylinositol, suggesting an unknown lipid might regulate actin-profilin interaction in vivo. Its function is as follows. Binds to actin and affects the structure of the cytoskeleton. At high concentrations inhibits spontaneous rabbit actin nucleation. This strongly suggests this archaea has a profilin-regulated actin system, and actin-type genes can be identified in this organism. The sequence is that of Loki profilin-2 from Lokiarchaeum sp. (strain GC14_75).